A 1048-amino-acid polypeptide reads, in one-letter code: B3 domain-containing protein Os02g0598200 (1048 aa).

The segment at 1–345 is disordered; that stretch reads MDGAVRGQGC…QKERVASSDN (345 aa). Basic residues predominate over residues 16-25; it reads SFNKTKKKNR. Composition is skewed to basic and acidic residues over residues 26-134, 151-162, 169-214, 243-253, 281-295, and 332-345; these read NCSD…SDDM, KKNSRNDADEEK, CSDD…GDKK, KNMKSDGDSYK, AKERKMRPSDSMEMK, and LKREQKERVASSDN. Residues 375 to 468 constitute a DNA-binding region (TF-B3 1); that stretch reads AFAFFKFVRD…TFSVRVFGID (94 aa). The tract at residues 505-528 is disordered; sequence QYQDSEDIHDGPNVSGESPRSKEP. A DNA-binding region (TF-B3 2) is located at residues 953–1048; the sequence is LQFCIPSTIQ…LAFQVYITRK (96 aa).

It is found in the nucleus. The chain is B3 domain-containing protein Os02g0598200 from Oryza sativa subsp. japonica (Rice).